The chain runs to 320 residues: MQNRNTFSWVKEQMTRSIFVSMMIYIITRASISNAYPIFAQQGYENPREATGRIVCANCHLANKPVDIEVPQAVLPDTVFEAVVRIPYDMQLKQVLANGKKGGLNVGAVLILPDGFELAPPDRISPAMKEKIGNLSFQSYRPTKKNILVIGPVPGQKYNEILFPILSPDPATKKEVHFLKYPIYVGGNRGRGQIYPDGSKSNNTVYNASASGIISRIIRKEKGGYEITIANALDGRQVVDIIPPGPELLVSEGESIKLDQPLTSNPNVGGFGQGDAEIVLQDPLRIQGLFLFLASVILAQIFLVLKKKQFEKVQLAEMNF.

The first 35 residues, 1–35 (MQNRNTFSWVKEQMTRSIFVSMMIYIITRASISNA), serve as a signal peptide directing secretion. The heme site is built by Tyr-36, Cys-56, Cys-59, and His-60. A helical transmembrane segment spans residues 286-306 (IQGLFLFLASVILAQIFLVLK).

This sequence belongs to the cytochrome f family. As to quaternary structure, the 4 large subunits of the cytochrome b6-f complex are cytochrome b6, subunit IV (17 kDa polypeptide, petD), cytochrome f and the Rieske protein, while the 4 small subunits are PetG, PetL, PetM and PetN. The complex functions as a dimer. It depends on heme as a cofactor.

The protein localises to the plastid. The protein resides in the chloroplast thylakoid membrane. In terms of biological role, component of the cytochrome b6-f complex, which mediates electron transfer between photosystem II (PSII) and photosystem I (PSI), cyclic electron flow around PSI, and state transitions. The chain is Cytochrome f from Amborella trichopoda.